The primary structure comprises 535 residues: Reticuline oxidase (535 aa).

The signal sequence occupies residues 1 to 23 (MMCRSLTLRFFLFIVLLQTCVRG). Residue N42 is glycosylated (N-linked (GlcNAc...) asparagine). The 175-residue stretch at 71 to 245 (TVSKPSFIVM…YAWKIKLLPV (175 aa)) folds into the FAD-binding PCMH-type domain. A cross-link (6-(S-cysteinyl)-8alpha-(pros-histidyl)-FAD (His-Cys)) is located at residues 108-170 (HSYEGLSYTA…DTLGFTAGWC (63 aa)). N-linked (GlcNAc...) asparagine glycosylation is present at N475.

This sequence belongs to the oxygen-dependent FAD-linked oxidoreductase family. The cofactor is FAD. Requires a metal cation as cofactor. Post-translationally, the FAD cofactor is bound via a bicovalent 6-S-cysteinyl, 8alpha-N1-histidyl FAD linkage. As to expression, expressed in roots and stems. Not detected in leaves or reproductive organs. Restricted to the parietal region of sieve elements adjacent or proximal to laticifers.

Its subcellular location is the cytoplasmic vesicle. The enzyme catalyses (S)-reticuline + O2 = (S)-scoulerine + H2O2 + H(+). It participates in alkaloid biosynthesis; (S)-scoulerine biosynthesis; (S)-scoulerine from (S)-reticuline: step 1/1. In terms of biological role, oxygen-dependent FAD-dependent oxidoreductase essential to the formation of benzophenanthridine alkaloids in the response of plants to pathogenic attack. Catalyzes the stereospecific conversion of the N-methyl moiety of (S)-reticuline into the berberine bridge carbon of (S)-scoulerine. Involved in the biosynthesis of sanguinarine. This is Reticuline oxidase (BBE1) from Papaver somniferum (Opium poppy).